We begin with the raw amino-acid sequence, 60 residues long: Large ribosomal subunit protein bL32 (60 aa).

This sequence belongs to the bacterial ribosomal protein bL32 family.

This is Large ribosomal subunit protein bL32 from Streptococcus gordonii (strain Challis / ATCC 35105 / BCRC 15272 / CH1 / DL1 / V288).